The following is a 289-amino-acid chain: Protease HtpX homolog (289 aa).

2 helical membrane passes run 10 to 30 (TAALFGVLWAVLLGLGAVIGS) and 34 to 54 (STTPIWIMALVGVGTTAYGYW). Zn(2+) is bound at residue His-138. Glu-139 is a catalytic residue. His-142 lines the Zn(2+) pocket. The next 2 helical transmembrane spans lie at 153–173 (VAAAVAGVITSVGQMLLIFGG) and 182–202 (LAVMAMALLAPLAAVVIQSAI). Residue Glu-207 coordinates Zn(2+).

The protein belongs to the peptidase M48B family. Zn(2+) is required as a cofactor.

The protein localises to the cell membrane. This is Protease HtpX homolog from Arthrobacter sp. (strain FB24).